Consider the following 343-residue polypeptide: Protein SOSEKI 4 (343 aa).

Residues 18-109 (RIVPVVYYLS…YVLKGSQILD (92 aa)) are DIX-like oligomerization domain. The interval 148 to 194 (RKLSMDASTQTDDRRRRKSPVDEVNEVTELSREEITSPPQSDSSPET) is disordered. The segment covering 184-194 (SPPQSDSSPET) has biased composition (polar residues). An Association to cell membranes motif is present at residues 233–234 (CG).

This sequence belongs to the SOSEKI family. Homodimer. Forms long polymer filaments with other SOKs proteins polymers (e.g. SOK1, SOK2, SOK3 and SOK4) crucial for polar localization and biological activity. Binds to ANGUSTIFOLIA (AN). As to expression, expressed during embryogenesis and in roots.

It is found in the cell membrane. Its function is as follows. SOSEKI proteins (SOK1-5) locally interpret global polarity cues and can influence cell division orientation to coordinate cell polarization relative to body axes, probably by guiding ANGUSTIFOLIA (AN) polarized localization. Positive regulator of auxin (indole-3-acetic acid, IAA) biosynthesis and signaling pathway leading to the modulation of seedling growth, plant and inflorescence development. Negative regulator of stress responses (e.g. salinity and osmotic stress). This chain is Protein SOSEKI 4, found in Arabidopsis thaliana (Mouse-ear cress).